We begin with the raw amino-acid sequence, 354 residues long: 3-dehydroquinate synthase (354 aa).

Residues 100-104 (GATGD), 124-125 (TT), K136, K145, and 163-166 (FLKT) contribute to the NAD(+) site. Zn(2+)-binding residues include E178, H242, and H256.

Belongs to the sugar phosphate cyclases superfamily. Dehydroquinate synthase family. The cofactor is Co(2+). Zn(2+) serves as cofactor. It depends on NAD(+) as a cofactor.

The protein localises to the cytoplasm. It catalyses the reaction 7-phospho-2-dehydro-3-deoxy-D-arabino-heptonate = 3-dehydroquinate + phosphate. It participates in metabolic intermediate biosynthesis; chorismate biosynthesis; chorismate from D-erythrose 4-phosphate and phosphoenolpyruvate: step 2/7. Its function is as follows. Catalyzes the conversion of 3-deoxy-D-arabino-heptulosonate 7-phosphate (DAHP) to dehydroquinate (DHQ). The sequence is that of 3-dehydroquinate synthase from Staphylococcus aureus (strain NCTC 8325 / PS 47).